Here is a 297-residue protein sequence, read N- to C-terminus: Aspartate carbamoyltransferase catalytic subunit (297 aa).

Positions 49 and 50 each coordinate carbamoyl phosphate. Lysine 77 lines the L-aspartate pocket. Carbamoyl phosphate-binding residues include arginine 99, histidine 129, and glutamine 132. L-aspartate contacts are provided by arginine 162 and arginine 215. Carbamoyl phosphate is bound by residues glycine 256 and proline 257.

Belongs to the aspartate/ornithine carbamoyltransferase superfamily. ATCase family. Heterododecamer (2C3:3R2) of six catalytic PyrB chains organized as two trimers (C3), and six regulatory PyrI chains organized as three dimers (R2).

The catalysed reaction is carbamoyl phosphate + L-aspartate = N-carbamoyl-L-aspartate + phosphate + H(+). Its pathway is pyrimidine metabolism; UMP biosynthesis via de novo pathway; (S)-dihydroorotate from bicarbonate: step 2/3. Its function is as follows. Catalyzes the condensation of carbamoyl phosphate and aspartate to form carbamoyl aspartate and inorganic phosphate, the committed step in the de novo pyrimidine nucleotide biosynthesis pathway. The polypeptide is Aspartate carbamoyltransferase catalytic subunit (Legionella pneumophila (strain Paris)).